The primary structure comprises 351 residues: Phosphate acyltransferase (351 aa).

It belongs to the PlsX family. As to quaternary structure, homodimer. Probably interacts with PlsY.

The protein resides in the cytoplasm. It catalyses the reaction a fatty acyl-[ACP] + phosphate = an acyl phosphate + holo-[ACP]. Its pathway is lipid metabolism; phospholipid metabolism. Its function is as follows. Catalyzes the reversible formation of acyl-phosphate (acyl-PO(4)) from acyl-[acyl-carrier-protein] (acyl-ACP). This enzyme utilizes acyl-ACP as fatty acyl donor, but not acyl-CoA. In Maricaulis maris (strain MCS10) (Caulobacter maris), this protein is Phosphate acyltransferase.